We begin with the raw amino-acid sequence, 576 residues long: Sulfite reductase [NADPH] hemoprotein beta-component (576 aa).

Residues Cys-435, Cys-441, Cys-480, and Cys-484 each contribute to the [4Fe-4S] cluster site. Cys-484 serves as a coordination point for siroheme.

It belongs to the nitrite and sulfite reductase 4Fe-4S domain family. As to quaternary structure, alpha(8)-beta(8). The alpha component is a flavoprotein, the beta component is a hemoprotein. Requires siroheme as cofactor. The cofactor is [4Fe-4S] cluster.

It carries out the reaction hydrogen sulfide + 3 NADP(+) + 3 H2O = sulfite + 3 NADPH + 4 H(+). It participates in sulfur metabolism; hydrogen sulfide biosynthesis; hydrogen sulfide from sulfite (NADPH route): step 1/1. Its function is as follows. Component of the sulfite reductase complex that catalyzes the 6-electron reduction of sulfite to sulfide. This is one of several activities required for the biosynthesis of L-cysteine from sulfate. This chain is Sulfite reductase [NADPH] hemoprotein beta-component, found in Yersinia pseudotuberculosis serotype O:1b (strain IP 31758).